The primary structure comprises 182 residues: Large ribosomal subunit protein uL6 (182 aa).

This sequence belongs to the universal ribosomal protein uL6 family. As to quaternary structure, part of the 50S ribosomal subunit.

In terms of biological role, this protein binds to the 23S rRNA, and is important in its secondary structure. It is located near the subunit interface in the base of the L7/L12 stalk, and near the tRNA binding site of the peptidyltransferase center. This chain is Large ribosomal subunit protein uL6, found in Caldicellulosiruptor saccharolyticus (strain ATCC 43494 / DSM 8903 / Tp8T 6331).